The following is a 56-amino-acid chain: Large ribosomal subunit protein uL30 (56 aa).

It belongs to the universal ribosomal protein uL30 family. In terms of assembly, part of the 50S ribosomal subunit.

This Nitratidesulfovibrio vulgaris (strain DSM 19637 / Miyazaki F) (Desulfovibrio vulgaris) protein is Large ribosomal subunit protein uL30.